The following is a 422-amino-acid chain: Proton-gated ion channel subunit pbo-6 (422 aa).

Positions 1-20 (MQCSFLTIFIFITTVTVGVA) are cleaved as a signal peptide. At 21–233 (EFSEQYQGSS…IKVARKPFYY (213 aa)) the chain is on the extracellular side. Cys-151 and Cys-165 are disulfide-bonded. 3 helical membrane-spanning segments follow: residues 234-254 (LISL…GLFA), 268-288 (LGVT…EKVP), and 294-314 (VPLL…ATIL). Topologically, residues 315–378 (TSTVMRVHAK…GEVSRRMDYL (64 aa)) are cytoplasmic. The helical transmembrane segment at 379–399 (LASVFIIIISTPTLYLFYMCF) threads the bilayer.

This sequence belongs to the ligand-gated ion channel (TC 1.A.9) family. Acetylcholine receptor (TC 1.A.9.1) subfamily. In terms of assembly, the functional channel is a hetero-oligomer of pbo-5 and pbo-6. Expressed in the posterior body muscles.

The protein resides in the membrane. Its function is as follows. Forms a proton-gated ion channel with pbo-5 that is activated by acidification of the posterior coelomic space, leading to posterior body wall muscle contraction (pBoc) during the defecation cycle. Not necessary for stimulation of posterior body contraction (pBoc). Does not bind neurotransmitters such as acetylcholine, gamma-aminobutyric acid, glycine, serotonin, glutamate or choline. This is Proton-gated ion channel subunit pbo-6 from Caenorhabditis elegans.